The following is a 336-amino-acid chain: Isopentenyl-diphosphate delta-isomerase (336 aa).

5-6 (RK) lines the substrate pocket. FMN contacts are provided by residues 60–62 (AMT), serine 90, and asparagine 117. Glutamine 147 provides a ligand contact to substrate. Glutamate 148 is a binding site for Mg(2+). FMN is bound by residues lysine 179, serine 204, threonine 209, 253–255 (GVR), and 274–275 (SR).

It belongs to the IPP isomerase type 2 family. In terms of assembly, homooctamer. Dimer of tetramers. FMN is required as a cofactor. The cofactor is NADPH. It depends on Mg(2+) as a cofactor.

It localises to the cytoplasm. It catalyses the reaction isopentenyl diphosphate = dimethylallyl diphosphate. In terms of biological role, involved in the biosynthesis of isoprenoids. Catalyzes the 1,3-allylic rearrangement of the homoallylic substrate isopentenyl (IPP) to its allylic isomer, dimethylallyl diphosphate (DMAPP). The chain is Isopentenyl-diphosphate delta-isomerase from Streptococcus pneumoniae (strain 70585).